Consider the following 513-residue polypeptide: Steroid (22S)-hydroxylase (513 aa).

A helical membrane pass occupies residues 8 to 28 (TLLPLLLLPSLLSLLLFLILL). The disordered stretch occupies residues 252 to 277 (DIKEEDQEEEEVKTEDEAEMSKSDHV). The span at 254–269 (KEEDQEEEEVKTEDEA) shows a compositional bias: acidic residues. Position 462 (Cys-462) interacts with heme.

The protein belongs to the cytochrome P450 family. Requires heme as cofactor. In terms of tissue distribution, expressed in stems, leaves, shoots, and roots, with a higher expression in siliques and apical shoots.

It is found in the membrane. The catalysed reaction is a C27-steroid + reduced [NADPH--hemoprotein reductase] + O2 = a (22S)-22-hydroxy C27-steroid + oxidized [NADPH--hemoprotein reductase] + H2O + H(+). It carries out the reaction a C28-steroid + reduced [NADPH--hemoprotein reductase] + O2 = a (22S)-22-hydroxy C28-steroid + oxidized [NADPH--hemoprotein reductase] + H2O + H(+). It catalyses the reaction a C29-steroid + reduced [NADPH--hemoprotein reductase] + O2 = a (22S)-22-hydroxy C29-steroid + oxidized [NADPH--hemoprotein reductase] + H2O + H(+). The enzyme catalyses cholesterol + reduced [NADPH--hemoprotein reductase] + O2 = (22S)-22-hydroxycholesterol + oxidized [NADPH--hemoprotein reductase] + H2O + H(+). The catalysed reaction is cholestanol + reduced [NADPH--hemoprotein reductase] + O2 = (22S)-22-hydroxycholestanol + oxidized [NADPH--hemoprotein reductase] + H2O + H(+). It carries out the reaction campestanol + reduced [NADPH--hemoprotein reductase] + O2 = 6-deoxycathasterone + oxidized [NADPH--hemoprotein reductase] + H2O + H(+). It catalyses the reaction campesterol + reduced [NADPH--hemoprotein reductase] + O2 = (22S)-22-hydroxycampesterol + oxidized [NADPH--hemoprotein reductase] + H2O + H(+). The enzyme catalyses 6-oxocampestanol + reduced [NADPH--hemoprotein reductase] + O2 = cathasterone + oxidized [NADPH--hemoprotein reductase] + H2O + H(+). The catalysed reaction is sitosterol + reduced [NADPH--hemoprotein reductase] + O2 = (22S)-22-hydroxysitosterol + oxidized [NADPH--hemoprotein reductase] + H2O + H(+). The protein operates within plant hormone biosynthesis; brassinosteroid biosynthesis. Catalyzes the C22-alpha-hydroxylation step in brassinosteroids biosynthesis. Converts campesterol (CR) to (22S)-22-hydroxycampesterol (22-OHCR, 22-hydroxyCR), campestanol (CN) to 6-deoxycathasterone (6-deoxoCT), and 6-oxocampestanol (6-oxoCN) to cathasterone (CT). Can also use cholesterol and cholestanol as substrates. This is Steroid (22S)-hydroxylase from Arabidopsis thaliana (Mouse-ear cress).